We begin with the raw amino-acid sequence, 388 residues long: Succinate--CoA ligase [ADP-forming] subunit beta (388 aa).

The region spanning 9–245 (KELLKSYGLP…KSQENERELK (237 aa)) is the ATP-grasp domain. ATP is bound by residues Lys46, 53 to 55 (GRG), Glu100, Tyr103, and Glu108. Mg(2+)-binding residues include Asn200 and Asp214. Residues Asn265 and 322-324 (GIV) contribute to the substrate site.

Belongs to the succinate/malate CoA ligase beta subunit family. In terms of assembly, heterotetramer of two alpha and two beta subunits. The cofactor is Mg(2+).

The enzyme catalyses succinate + ATP + CoA = succinyl-CoA + ADP + phosphate. It catalyses the reaction GTP + succinate + CoA = succinyl-CoA + GDP + phosphate. It participates in carbohydrate metabolism; tricarboxylic acid cycle; succinate from succinyl-CoA (ligase route): step 1/1. Its function is as follows. Succinyl-CoA synthetase functions in the citric acid cycle (TCA), coupling the hydrolysis of succinyl-CoA to the synthesis of either ATP or GTP and thus represents the only step of substrate-level phosphorylation in the TCA. The beta subunit provides nucleotide specificity of the enzyme and binds the substrate succinate, while the binding sites for coenzyme A and phosphate are found in the alpha subunit. This chain is Succinate--CoA ligase [ADP-forming] subunit beta, found in Psychrobacter arcticus (strain DSM 17307 / VKM B-2377 / 273-4).